The sequence spans 216 residues: Somatotropin (216 aa).

The signal sequence occupies residues 1 to 26; sequence MAADPQSSVLLAFALLCLPWPQEVGA. Histidine 45 contributes to the Zn(2+) binding site. Cysteine 78 and cysteine 189 are oxidised to a cystine. Phosphoserine is present on serine 131. Zn(2+) is bound at residue glutamate 198. Cysteine 206 and cysteine 214 form a disulfide bridge.

It belongs to the somatotropin/prolactin family.

The protein resides in the secreted. Its function is as follows. Plays an important role in growth control. Its major role in stimulating body growth is to stimulate the liver and other tissues to secrete IGF1. It stimulates both the differentiation and proliferation of myoblasts. It also stimulates amino acid uptake and protein synthesis in muscle and other tissues. This chain is Somatotropin (GH1), found in Ailuropoda melanoleuca (Giant panda).